A 254-amino-acid polypeptide reads, in one-letter code: Probable pectate lyase E (254 aa).

Residues 1–17 (MYQPLLLLPLLLTSAFA) form the signal peptide. Asn175 is a glycosylation site (N-linked (GlcNAc...) asparagine). A disordered region spans residues 228-254 (DNNKKEPAKKSSGPSNACKYKEPLASC).

This sequence belongs to the polysaccharide lyase 3 family. Requires Ca(2+) as cofactor.

The protein localises to the secreted. It catalyses the reaction Eliminative cleavage of (1-&gt;4)-alpha-D-galacturonan to give oligosaccharides with 4-deoxy-alpha-D-galact-4-enuronosyl groups at their non-reducing ends.. Pectinolytic enzyme consist of four classes of enzymes: pectin lyase, polygalacturonase, pectin methylesterase and rhamnogalacturonase. Among pectinolytic enzymes, pectin lyase is the most important in depolymerization of pectin, since it cleaves internal glycosidic bonds of highly methylated pectins. Favors pectate, the anion, over pectin, the methyl ester. The chain is Probable pectate lyase E (plyE) from Aspergillus fumigatus (strain ATCC MYA-4609 / CBS 101355 / FGSC A1100 / Af293) (Neosartorya fumigata).